The chain runs to 525 residues: GMP synthase [glutamine-hydrolyzing] (525 aa).

Residues 9–207 (RILILDFGSQ…VMDICKCEKL (199 aa)) form the Glutamine amidotransferase type-1 domain. Cys86 functions as the Nucleophile in the catalytic mechanism. Catalysis depends on residues His181 and Glu183. The 193-residue stretch at 208–400 (WTAGAIIEDA…LGLPYDMLYR (193 aa)) folds into the GMPS ATP-PPase domain. 235 to 241 (SGGVDSS) contacts ATP.

Homodimer.

It catalyses the reaction XMP + L-glutamine + ATP + H2O = GMP + L-glutamate + AMP + diphosphate + 2 H(+). The protein operates within purine metabolism; GMP biosynthesis; GMP from XMP (L-Gln route): step 1/1. Its function is as follows. Catalyzes the synthesis of GMP from XMP. The chain is GMP synthase [glutamine-hydrolyzing] from Alteromonas mediterranea (strain DSM 17117 / CIP 110805 / LMG 28347 / Deep ecotype).